The chain runs to 538 residues: Pyruvate kinase (538 aa).

S45 is modified (phosphoserine). R72 provides a ligand contact to substrate. K(+)-binding residues include N74, S76, D107, and T108. 74-77 (NFSH) contributes to the ATP binding site. R114 and K200 together coordinate ATP. Position 265 (E265) interacts with Mg(2+). Residues G288, D289, and T321 each contribute to the substrate site. D289 provides a ligand contact to Mg(2+).

It belongs to the pyruvate kinase family. In terms of assembly, homotetramer. Mg(2+) serves as cofactor. The cofactor is K(+).

The catalysed reaction is pyruvate + ATP = phosphoenolpyruvate + ADP + H(+). It participates in carbohydrate degradation; glycolysis; pyruvate from D-glyceraldehyde 3-phosphate: step 5/5. This Hypocrea jecorina (Trichoderma reesei) protein is Pyruvate kinase (pki1).